The following is a 274-amino-acid chain: Diaminopimelate epimerase (274 aa).

Substrate is bound by residues N11, Q44, and N64. C73 (proton donor) is an active-site residue. Residues 74-75 (GN), N157, N190, and 208-209 (ER) contribute to the substrate site. Residue C217 is the Proton acceptor of the active site. Residue 218-219 (GS) participates in substrate binding.

The protein belongs to the diaminopimelate epimerase family. As to quaternary structure, homodimer.

It localises to the cytoplasm. The enzyme catalyses (2S,6S)-2,6-diaminopimelate = meso-2,6-diaminopimelate. It participates in amino-acid biosynthesis; L-lysine biosynthesis via DAP pathway; DL-2,6-diaminopimelate from LL-2,6-diaminopimelate: step 1/1. Its function is as follows. Catalyzes the stereoinversion of LL-2,6-diaminopimelate (L,L-DAP) to meso-diaminopimelate (meso-DAP), a precursor of L-lysine and an essential component of the bacterial peptidoglycan. This is Diaminopimelate epimerase from Yersinia enterocolitica serotype O:8 / biotype 1B (strain NCTC 13174 / 8081).